The primary structure comprises 274 residues: 2-dehydro-3-deoxyphosphooctonate aldolase (274 aa).

The protein belongs to the KdsA family.

It is found in the cytoplasm. It carries out the reaction D-arabinose 5-phosphate + phosphoenolpyruvate + H2O = 3-deoxy-alpha-D-manno-2-octulosonate-8-phosphate + phosphate. Its pathway is carbohydrate biosynthesis; 3-deoxy-D-manno-octulosonate biosynthesis; 3-deoxy-D-manno-octulosonate from D-ribulose 5-phosphate: step 2/3. It functions in the pathway bacterial outer membrane biogenesis; lipopolysaccharide biosynthesis. The protein is 2-dehydro-3-deoxyphosphooctonate aldolase of Rickettsia felis (strain ATCC VR-1525 / URRWXCal2) (Rickettsia azadi).